We begin with the raw amino-acid sequence, 886 residues long: Alanine--tRNA ligase (886 aa).

Zn(2+) contacts are provided by histidine 564, histidine 568, cysteine 666, and histidine 670.

This sequence belongs to the class-II aminoacyl-tRNA synthetase family. Zn(2+) is required as a cofactor.

Its subcellular location is the cytoplasm. It catalyses the reaction tRNA(Ala) + L-alanine + ATP = L-alanyl-tRNA(Ala) + AMP + diphosphate. In terms of biological role, catalyzes the attachment of alanine to tRNA(Ala) in a two-step reaction: alanine is first activated by ATP to form Ala-AMP and then transferred to the acceptor end of tRNA(Ala). Also edits incorrectly charged Ser-tRNA(Ala) and Gly-tRNA(Ala) via its editing domain. The chain is Alanine--tRNA ligase from Prochlorococcus marinus subsp. pastoris (strain CCMP1986 / NIES-2087 / MED4).